The primary structure comprises 517 residues: tRNA-2-methylthio-N(6)-dimethylallyladenosine synthase (517 aa).

The MTTase N-terminal domain occupies 18-137; that stretch reads RTYQVRTYGC…LPTLLDRARH (120 aa). Residues Cys27, Cys66, Cys100, Cys174, Cys178, and Cys181 each contribute to the [4Fe-4S] cluster site. One can recognise a Radical SAM core domain in the interval 160–397; the sequence is RESDYAAWVS…ELQEQICMEE (238 aa). Residues 399–470 form the TRAM domain; that stretch reads RVLIGRIVEL…PHHLIADAGI (72 aa).

This sequence belongs to the methylthiotransferase family. MiaB subfamily. In terms of assembly, monomer. [4Fe-4S] cluster serves as cofactor.

Its subcellular location is the cytoplasm. The catalysed reaction is N(6)-dimethylallyladenosine(37) in tRNA + (sulfur carrier)-SH + AH2 + 2 S-adenosyl-L-methionine = 2-methylsulfanyl-N(6)-dimethylallyladenosine(37) in tRNA + (sulfur carrier)-H + 5'-deoxyadenosine + L-methionine + A + S-adenosyl-L-homocysteine + 2 H(+). Functionally, catalyzes the methylthiolation of N6-(dimethylallyl)adenosine (i(6)A), leading to the formation of 2-methylthio-N6-(dimethylallyl)adenosine (ms(2)i(6)A) at position 37 in tRNAs that read codons beginning with uridine. The protein is tRNA-2-methylthio-N(6)-dimethylallyladenosine synthase of Mycobacterium leprae (strain TN).